Consider the following 42-residue polypeptide: Beta-2-microglobulin (42 aa).

The Ig-like C1-type domain occupies 5-42; the sequence is PKIQVYSRHPAZBGKPBFLBCYVSGFHPXZIZIBLLKB.

Heterodimer of an alpha chain and a beta chain. Beta-2-microglobulin is the beta-chain of major histocompatibility complex class I molecules.

It localises to the secreted. Its function is as follows. Component of the class I major histocompatibility complex (MHC). Involved in the presentation of peptide antigens to the immune system. This chain is Beta-2-microglobulin (B2M), found in Canis lupus familiaris (Dog).